Consider the following 192-residue polypeptide: Large ribosomal subunit protein uL6 (192 aa).

It belongs to the universal ribosomal protein uL6 family. As to quaternary structure, part of the 50S ribosomal subunit.

In terms of biological role, this protein binds to the 23S rRNA, and is important in its secondary structure. It is located near the subunit interface in the base of the L7/L12 stalk, and near the tRNA binding site of the peptidyltransferase center. The sequence is that of Large ribosomal subunit protein uL6 from Nanoarchaeum equitans (strain Kin4-M).